The primary structure comprises 628 residues: Chaperone protein HtpG (628 aa).

The tract at residues Met-1–Arg-337 is a; substrate-binding. The b stretch occupies residues Glu-338 to Lys-554. The interval Met-555–Arg-628 is c.

This sequence belongs to the heat shock protein 90 family. As to quaternary structure, homodimer.

The protein localises to the cytoplasm. Its function is as follows. Molecular chaperone. Has ATPase activity. The chain is Chaperone protein HtpG from Francisella tularensis subsp. holarctica (strain FTNF002-00 / FTA).